We begin with the raw amino-acid sequence, 114 residues long: Histone H3-3 (114 aa).

Basic residues predominate over residues Asn1–Lys17. A disordered region spans residues Asn1–His32. Over residues Lys18–Val28 the composition is skewed to low complexity.

Belongs to the histone H3 family. In terms of assembly, the nucleosome is a histone octamer containing two molecules each of H2A, H2B, H3 and H4 assembled in one H3-H4 heterotetramer and two H2A-H2B heterodimers. The octamer wraps approximately 147 bp of DNA.

The protein localises to the nucleus. It localises to the chromosome. In terms of biological role, core component of nucleosome. Nucleosomes wrap and compact DNA into chromatin, limiting DNA accessibility to the cellular machineries which require DNA as a template. Histones thereby play a central role in transcription regulation, DNA repair, DNA replication and chromosomal stability. DNA accessibility is regulated via a complex set of post-translational modifications of histones, also called histone code, and nucleosome remodeling. The polypeptide is Histone H3-3 (H3-3) (Stylonychia lemnae (Ciliate)).